Here is a 278-residue protein sequence, read N- to C-terminus: Gasdermin-like protein het-Q1 (278 aa).

It belongs to the gasdermin family. Homooligomer; forms a homooligomeric ring-shaped pore complex when inserted in the membrane. Post-translationally, the precursor form is cleaved by het-Q2, generating the pore-forming protein (Gasdermin-like protein het-Q1, N-terminal).

The protein localises to the cell membrane. In terms of biological role, gasdermin-like protein involved in heterokaryon incompatibility, a process that ensures that during spontaneous vegetative cell fusion, only compatible cells from the same colony survive (non-self-recognition). In P.anserina, the het-q locus exists as 2 incompatible alleles, het-Q1 (this entry) and het-Q2 (AC P0DW09). This form constitutes the precursor of the pore-forming protein: during the allorecognition process, it is cleaved by het-Q2, releasing the N-terminal moiety (Gasdermin-like protein het-Q1, N-terminal) that binds to membranes and forms pores, triggering cell death. Its function is as follows. Pore-forming protein that causes membrane permeabilization and cell death. Released upon cleavage and maturation by het-Q2 and binds to membrane inner leaflet lipids. Homooligomerizes within the membrane and forms pores of 10-15 nanometers (nm) of inner diameter, triggering cell death. This is Gasdermin-like protein het-Q1 from Podospora anserina (strain S / ATCC MYA-4624 / DSM 980 / FGSC 10383) (Pleurage anserina).